We begin with the raw amino-acid sequence, 61 residues long: Small ribosomal subunit protein uS14B (61 aa).

Cys-24, Cys-27, Cys-40, and Cys-43 together coordinate Zn(2+).

It belongs to the universal ribosomal protein uS14 family. Zinc-binding uS14 subfamily. Part of the 30S ribosomal subunit. Contacts proteins S3 and S10. The cofactor is Zn(2+).

In terms of biological role, binds 16S rRNA, required for the assembly of 30S particles and may also be responsible for determining the conformation of the 16S rRNA at the A site. The chain is Small ribosomal subunit protein uS14B from Mycolicibacterium gilvum (strain PYR-GCK) (Mycobacterium gilvum (strain PYR-GCK)).